Here is an 82-residue protein sequence, read N- to C-terminus: U1-theraphotoxin-Ct1b (82 aa).

Residues M1 to A23 form the signal peptide. The propeptide occupies E24–R44.

It belongs to the neurotoxin 12 (Hwtx-2) family. 03 (juruin) subfamily. In terms of processing, contains 3 disulfide bonds. Two different connectivities are observed in similar proteins (C1-C3, C2-C5, C4-C6 or C1-C4, C2-C5, C3-C6). As to expression, expressed by the venom gland.

Its subcellular location is the secreted. Functionally, this toxin causes paralysis and death to sheep blowflies. It does not target insect sodium channels. The sequence is that of U1-theraphotoxin-Ct1b from Coremiocnemis tropix (Australian tarantula spider).